We begin with the raw amino-acid sequence, 400 residues long: Phosphoglycerate kinase (400 aa).

Substrate contacts are provided by residues 21–23, Arg36, 59–62, Arg116, and Arg149; these read DLN and HLGR. ATP is bound by residues Lys200, Glu317, and 343–346; that span reads GGDT.

The protein belongs to the phosphoglycerate kinase family. As to quaternary structure, monomer.

Its subcellular location is the cytoplasm. It carries out the reaction (2R)-3-phosphoglycerate + ATP = (2R)-3-phospho-glyceroyl phosphate + ADP. It functions in the pathway carbohydrate degradation; glycolysis; pyruvate from D-glyceraldehyde 3-phosphate: step 2/5. The polypeptide is Phosphoglycerate kinase (Blochmanniella floridana).